The primary structure comprises 486 residues: E3 ubiquitin-protein ligase TRIM50 (486 aa).

The RING-type zinc finger occupies 16-57 (CPVCLEVFKEPLMLQCGHSYCKGCLLSLSRHLDSELRCPVCR). Residues 84-125 (PEPQVCTHHRNPLSLFCEKDQELICGLCGLLGSHQHHRVTPV) form a B box-type zinc finger. Zn(2+) is bound by residues C89, H92, C111, and H117. Coiled coils occupy residues 125–170 (VSTV…ESDV) and 204–235 (LVASLDMQLEQARGAQERLAQATCMLEQFGNE). Residues 275 to 474 (DIKLTVWKRL…LPMVLPLPSG (200 aa)) enclose the B30.2/SPRY domain. K372 is subject to N6-acetyllysine.

It belongs to the TRIM/RBCC family. In terms of assembly, can form dimers and trimers. Interacts with several E2 ubiquitin-conjugating enzymes, including UBE2L6, UBE2E1, UBE2E3. No interaction with UBE2H. Interacts with BECN1. Interacts with SQSTM1. Interacts with NLRP3. In terms of processing, auto-ubiquitinated. Post-translationally, acetylated by EP300 and KAT2B. HDAC6 drives TRIM50 deacetylation. Acetylation antagonizes with TRIM50 ubiquitination.

It is found in the cytoplasm. It catalyses the reaction S-ubiquitinyl-[E2 ubiquitin-conjugating enzyme]-L-cysteine + [acceptor protein]-L-lysine = [E2 ubiquitin-conjugating enzyme]-L-cysteine + N(6)-ubiquitinyl-[acceptor protein]-L-lysine.. Functionally, E3 ubiquitin-protein ligase that ubiquitinates Beclin-1/BECN1 in a 'Lys-63'-dependent manner enhancing its binding to ULK1. In turn, promotes starvation-induced autophagy activation. Also interacts with p62/SQSTM1 protein and thereby induces the formation and the autophagy clearance of aggresome-associated polyubiquitinated proteins through HDAC6 interaction. Also promotes NLRP3 inflammasome activation by directly inducing NLRP3 oligomerization independent of its E3 ligase function. This is E3 ubiquitin-protein ligase TRIM50 (TRIM50) from Sus scrofa (Pig).